A 340-amino-acid chain; its full sequence is MGVPIGEIIPRKEIELENLYGKKIAIDALNAIYQFLSTIRQKDGTPLMDSKGRITSHLSGLFYRTINLMEAGIKPVYVFDGEPPEFKKKELEKRREAREEAEEKWREALEKGEIEEARKYAQRATRVNEMLIEDAKKLLELMGIPIVQAPSEGEAQAAYMAAKGSVYASASQDYDSLLFGAPRLVRNLTITGKRKLPGKNVYVEIKPELIILEEVLKELKLTREKLIELAILVGTDYNPGGIKGIGLKKALEIVRHSKDPLAKFQKQSDVDLYAIKEFFLNPPVTDNYNLVWRDPDEEGILKFLCDEHDFSEERVKNGLERLKKAIKSGKQSTLESWFKR.

Residues M1–R98 form an N-domain region. 7 residues coordinate Mg(2+): D27, D80, E152, E154, D173, D175, and D236. The tract at residues E116–K258 is I-domain. An interaction with PCNA region spans residues K330–F338.

This sequence belongs to the XPG/RAD2 endonuclease family. FEN1 subfamily. As to quaternary structure, interacts with PCNA. PCNA stimulates the nuclease activity without altering cleavage specificity. The cofactor is Mg(2+).

Its function is as follows. Structure-specific nuclease with 5'-flap endonuclease and 5'-3' exonuclease activities involved in DNA replication and repair. During DNA replication, cleaves the 5'-overhanging flap structure that is generated by displacement synthesis when DNA polymerase encounters the 5'-end of a downstream Okazaki fragment. Binds the unpaired 3'-DNA end and kinks the DNA to facilitate 5' cleavage specificity. Cleaves one nucleotide into the double-stranded DNA from the junction in flap DNA, leaving a nick for ligation. Also involved in the base excision repair (BER) pathway. Acts as a genome stabilization factor that prevents flaps from equilibrating into structures that lead to duplications and deletions. Also possesses 5'-3' exonuclease activity on nicked or gapped double-stranded DNA. The sequence is that of Flap endonuclease 1 from Pyrococcus furiosus (strain ATCC 43587 / DSM 3638 / JCM 8422 / Vc1).